We begin with the raw amino-acid sequence, 136 residues long: ATP synthase epsilon chain, plastid (136 aa).

This sequence belongs to the ATPase epsilon chain family. As to quaternary structure, F-type ATPases have 2 components, CF(1) - the catalytic core - and CF(0) - the membrane proton channel. CF(1) has five subunits: alpha(3), beta(3), gamma(1), delta(1), epsilon(1). CF(0) has three main subunits: a, b and c.

Its subcellular location is the plastid thylakoid membrane. In terms of biological role, produces ATP from ADP in the presence of a proton gradient across the membrane. The polypeptide is ATP synthase epsilon chain, plastid (Cuscuta reflexa (Southern Asian dodder)).